We begin with the raw amino-acid sequence, 161 residues long: uncharacterized protein (161 aa).

The stretch at 1–29 (MTLYDTVKELQEKLRNGEIEINTFLERLG) forms a coiled coil.

This is an uncharacterized protein from Acidianus convivator (ATV).